A 526-amino-acid polypeptide reads, in one-letter code: Outer capsid protein VP5 (526 aa).

The tract at residues 1 to 42 (MGKIIKSLSRFGKKVGNALTSNTAKKIYSTIGKAAERFAESE) is involved in membrane permeabilization.

Belongs to the orbivirus VP5 family.

It localises to the virion. VP5 protein is one of the two proteins (with VP2) which constitute the virus particle outer capsid. Acts as a membrane permeabilization protein that mediates release of viral particles from endosomal compartments into the cytoplasm. Permeabilization activity is probably negatively regulated by VP2 and is triggered by endosomal degradation of VP2 and exposure to low pH. The sequence is that of Outer capsid protein VP5 (Segment-6) from Antilocapra americana (Pronghorn).